The chain runs to 761 residues: Signal transducer and transcription activator (761 aa).

In terms of domain architecture, SH2 spans 594–658; it reads WKAGCIMGFI…APWTARDFQV (65 aa). Y711 is modified (phosphotyrosine; by JAK).

It belongs to the transcription factor STAT family. In terms of assembly, forms a homodimer or a heterodimer with a related family member. Tyrosine phosphorylated by hopscotch. Phosphorylation is required for DNA-binding activity and dimerization.

It localises to the cytoplasm. The protein localises to the nucleus. In terms of biological role, might play a role in signal transduction and activation of transcription. Plays an important role in the segmental pattern formation in the early embryo by activating specific stripes of pair rule gene expression in early development as part of the Janus kinase-STAT pathway. Might play a role in male germline stem cell maintenance. The sequence is that of Signal transducer and transcription activator (Stat92E) from Drosophila melanogaster (Fruit fly).